A 311-amino-acid polypeptide reads, in one-letter code: Aspartate carbamoyltransferase catalytic subunit (311 aa).

Carbamoyl phosphate-binding residues include Arg-58 and Thr-59. An L-aspartate-binding site is contributed by Lys-86. Carbamoyl phosphate is bound by residues Arg-108, His-136, and Gln-139. Residues Arg-169 and Arg-223 each contribute to the L-aspartate site. Residues Gly-264 and Pro-265 each contribute to the carbamoyl phosphate site.

Belongs to the aspartate/ornithine carbamoyltransferase superfamily. ATCase family. In terms of assembly, heterododecamer (2C3:3R2) of six catalytic PyrB chains organized as two trimers (C3), and six regulatory PyrI chains organized as three dimers (R2).

The enzyme catalyses carbamoyl phosphate + L-aspartate = N-carbamoyl-L-aspartate + phosphate + H(+). It functions in the pathway pyrimidine metabolism; UMP biosynthesis via de novo pathway; (S)-dihydroorotate from bicarbonate: step 2/3. Its function is as follows. Catalyzes the condensation of carbamoyl phosphate and aspartate to form carbamoyl aspartate and inorganic phosphate, the committed step in the de novo pyrimidine nucleotide biosynthesis pathway. The polypeptide is Aspartate carbamoyltransferase catalytic subunit (Acidiphilium cryptum (strain JF-5)).